Here is a 454-residue protein sequence, read N- to C-terminus: Putative F-box/LRR-repeat protein At3g58880 (454 aa).

The 47-residue stretch at 2–48 (VDLVSSLPDDLLGHILSLLTTKEAALTSILSKRWRYLIAFVPYLEFD) folds into the F-box domain. 7 LRR repeats span residues 77-102 (LALH…DLLN), 144-168 (SGCR…TLDS), 169-194 (VSWS…NLAN), 214-240 (IKSV…NYTA), 270-301 (LVSV…YLSP), 303-327 (TLQV…VIES), and 328-353 (SMDI…VIKG).

This Arabidopsis thaliana (Mouse-ear cress) protein is Putative F-box/LRR-repeat protein At3g58880.